The chain runs to 240 residues: Probable transcriptional regulatory protein Nmul_A2722 (240 aa).

Belongs to the TACO1 family.

It is found in the cytoplasm. The sequence is that of Probable transcriptional regulatory protein Nmul_A2722 from Nitrosospira multiformis (strain ATCC 25196 / NCIMB 11849 / C 71).